Here is a 393-residue protein sequence, read N- to C-terminus: 1-deoxy-D-xylulose 5-phosphate reductoisomerase (393 aa).

Threonine 10, glycine 11, serine 12, isoleucine 13, arginine 37, and asparagine 124 together coordinate NADPH. Lysine 125 is a binding site for 1-deoxy-D-xylulose 5-phosphate. Glutamate 126 serves as a coordination point for NADPH. Aspartate 150 serves as a coordination point for Mn(2+). Residues serine 151, glutamate 152, serine 182, and histidine 205 each contribute to the 1-deoxy-D-xylulose 5-phosphate site. Residue glutamate 152 participates in Mn(2+) binding. Residue glycine 211 coordinates NADPH. Residues serine 218, asparagine 223, lysine 224, and glutamate 227 each contribute to the 1-deoxy-D-xylulose 5-phosphate site. Glutamate 227 serves as a coordination point for Mn(2+).

The protein belongs to the DXR family. Requires Mg(2+) as cofactor. Mn(2+) is required as a cofactor.

The catalysed reaction is 2-C-methyl-D-erythritol 4-phosphate + NADP(+) = 1-deoxy-D-xylulose 5-phosphate + NADPH + H(+). It functions in the pathway isoprenoid biosynthesis; isopentenyl diphosphate biosynthesis via DXP pathway; isopentenyl diphosphate from 1-deoxy-D-xylulose 5-phosphate: step 1/6. Catalyzes the NADPH-dependent rearrangement and reduction of 1-deoxy-D-xylulose-5-phosphate (DXP) to 2-C-methyl-D-erythritol 4-phosphate (MEP). The protein is 1-deoxy-D-xylulose 5-phosphate reductoisomerase of Nitrosococcus oceani (strain ATCC 19707 / BCRC 17464 / JCM 30415 / NCIMB 11848 / C-107).